We begin with the raw amino-acid sequence, 1957 residues long: [F-actin]-monooxygenase MICAL2 (1957 aa).

The interval 2-494 (GENEDEKQAQ…KHLYITKELE (493 aa)) is monooxygenase domain. Residues cysteine 97, 116-118 (EKR), 123-125 (RNN), phenylalanine 183, tyrosine 298, and aspartate 398 contribute to the FAD site. The Calponin-homology (CH) domain occupies 516–619 (DIRPSKLLTW…MVMYLSKFYE (104 aa)). Serine 631 bears the Phosphoserine mark. Positions 660 to 681 (RKRTPRVDGQTGENDMNKRRRK) match the Nuclear localization signal motif. 2 disordered regions span residues 660 to 714 (RKRT…NQNK) and 886 to 942 (QNKL…HPSH). Residues 687–714 (DEPSNFSSRSLGSNQECGSSKEGGNQNK) show a composition bias toward polar residues. The span at 899–910 (PPSPPSRLPSPD) shows a compositional bias: pro residues. Over residues 911–925 (PAASSSPSTVDSASP) the composition is skewed to low complexity. Residues 1000–1062 (DTCYFCKKRV…KPHFIHCKTN (63 aa)) form the LIM zinc-binding domain. Residues cysteine 1002, cysteine 1005, histidine 1023, cysteine 1026, cysteine 1029, cysteine 1032, cysteine 1052, and histidine 1055 each contribute to the Zn(2+) site. Disordered stretches follow at residues 1070 to 1143 (AELK…PSEW), 1168 to 1243 (SEDS…TPSK), 1258 to 1345 (VNKR…LYLP), 1361 to 1431 (GEDG…EGGP), 1467 to 1626 (KAGE…SPPC), and 1675 to 1779 (ESRQ…KEKK). Over residues 1185 to 1195 (SHTEPCEEKPW) the composition is skewed to basic and acidic residues. Positions 1232 to 1243 (RANSFQSPTPSK) are enriched in polar residues. Over residues 1275–1294 (LPSSSSHSSSPPSSSSTSVS) the composition is skewed to low complexity. Positions 1302 to 1316 (SPPQMTASEPLSQVS) are enriched in polar residues. The interval 1324–1363 (TPNFRRRAVAQGAPREIPLYLPHHPKPEWAEYCLVSPGED) is interaction with MAPK1. Basic and acidic residues-rich tracts occupy residues 1388–1402 (SNHR…KDRS) and 1413–1431 (GEDR…EGGP). Residues 1485–1496 (VLKPVRPLLLPR) are compositionally biased toward low complexity. Basic and acidic residues predominate over residues 1552–1562 (GGKKAWAKQES). Positions 1570 to 1579 (CTRSFSLRKT) are enriched in polar residues. Position 1688 is a phosphoserine (serine 1688). A compositionally biased stretch (pro residues) spans 1718 to 1733 (APPPPPPPPPPPPPPT). Residues 1751-1762 (ASSSASSTSSSS) show a composition bias toward low complexity. One can recognise a bMERB domain in the interval 1796–1945 (KQEELKRLYK…EKAEDQHFES (150 aa)).

It belongs to the Mical family. As to quaternary structure, interacts with PLXNA4. Interacts with RAB1B. Interacts with MAPK1/ERK2. Interacts with RAB35, RAB8A, RAB10, RAB13 and RAB15 (in their GTP-bound forms); binding to RAB35 is of low affinity compared to other Rab proteins; at least in case of RAB8A may bind 2 molecules of RAB8A simultaneously through a high and a low affinity binding site, respectively. May interact with MAPK1/ERK2. Interacts with CORO1C; this interaction recruits MICAL2 to the actin filaments. The cofactor is FAD.

The protein resides in the nucleus. It is found in the cytoplasm. The enzyme catalyses L-methionyl-[F-actin] + NADPH + O2 + H(+) = L-methionyl-(R)-S-oxide-[F-actin] + NADP(+) + H2O. Specifically inhibited by CCG-1423, a small molecule inhibitor of SRF:MKL1/MRTF-A-dependent transcription. In terms of biological role, methionine monooxygenase that promotes depolymerization of F-actin by mediating oxidation of residues 'Met-44' and 'Met-47' on actin to form methionine-sulfoxide, resulting in actin filament disassembly and preventing repolymerization. Regulates the disassembly of branched actin networks also by oxidizing ARP3B-containing ARP2/3 complexes leading to ARP3B dissociation from the network. Acts as a key regulator of the SRF signaling pathway elicited by nerve growth factor and serum: mediates oxidation and subsequent depolymerization of nuclear actin, leading to increase MKL1/MRTF-A presence in the nucleus and promote SRF:MKL1/MRTF-A-dependent gene transcription. Does not activate SRF:MKL1/MRTF-A through RhoA. The chain is [F-actin]-monooxygenase MICAL2 from Homo sapiens (Human).